The following is a 570-amino-acid chain: Dual specificity testis-specific protein kinase 2 (570 aa).

The region spanning 58 to 313 (DFTREKIGSG…EIGKTLEEIM (256 aa)) is the Protein kinase domain. Residues 64 to 72 (IGSGFFSEV) and lysine 87 contribute to the ATP site. Aspartate 176 functions as the Proton acceptor in the catalytic mechanism. Residue serine 219 is modified to Phosphoserine; by autocatalysis. A phosphoserine mark is found at serine 369, serine 456, and serine 460. The disordered stretch occupies residues 513-570 (DCSNPQEENGFVPRPKGTSPCSGAASEEMEVEEERPRRAPVHFSISGISLQTQGEQDG). Residues 558-570 (SGISLQTQGEQDG) are compositionally biased toward polar residues.

Belongs to the protein kinase superfamily. TKL Ser/Thr protein kinase family. Mg(2+) serves as cofactor. The cofactor is Mn(2+). As to expression, predominantly expressed in testis and prostate. Found predominantly in non-germinal Sertoli cells.

The protein resides in the nucleus. It catalyses the reaction L-seryl-[protein] + ATP = O-phospho-L-seryl-[protein] + ADP + H(+). The enzyme catalyses L-threonyl-[protein] + ATP = O-phospho-L-threonyl-[protein] + ADP + H(+). It carries out the reaction L-tyrosyl-[protein] + ATP = O-phospho-L-tyrosyl-[protein] + ADP + H(+). With respect to regulation, activated by autophosphorylation on Ser-219. Functionally, dual specificity protein kinase activity catalyzing autophosphorylation and phosphorylation of exogenous substrates on both serine/threonine and tyrosine residues. Phosphorylates cofilin at 'Ser-3'. May play an important role in spermatogenesis. The chain is Dual specificity testis-specific protein kinase 2 (Tesk2) from Rattus norvegicus (Rat).